Consider the following 156-residue polypeptide: Ribosomal RNA large subunit methyltransferase H (156 aa).

S-adenosyl-L-methionine-binding positions include Leu-73, Gly-104, and Leu-123 to Leu-128.

It belongs to the RNA methyltransferase RlmH family. As to quaternary structure, homodimer.

The protein localises to the cytoplasm. It catalyses the reaction pseudouridine(1915) in 23S rRNA + S-adenosyl-L-methionine = N(3)-methylpseudouridine(1915) in 23S rRNA + S-adenosyl-L-homocysteine + H(+). In terms of biological role, specifically methylates the pseudouridine at position 1915 (m3Psi1915) in 23S rRNA. This is Ribosomal RNA large subunit methyltransferase H from Shewanella oneidensis (strain ATCC 700550 / JCM 31522 / CIP 106686 / LMG 19005 / NCIMB 14063 / MR-1).